A 194-amino-acid chain; its full sequence is Putative manganese efflux pump MntP (194 aa).

The next 6 membrane-spanning stretches (helical) occupy residues proline 3 to glycine 23, leucine 37 to leucine 57, isoleucine 65 to isoleucine 85, leucine 112 to phenylalanine 132, isoleucine 137 to methionine 157, and alanine 170 to leucine 190.

It belongs to the MntP (TC 9.B.29) family.

The protein resides in the cell inner membrane. Probably functions as a manganese efflux pump. The sequence is that of Putative manganese efflux pump MntP from Xylella fastidiosa (strain M23).